An 85-amino-acid polypeptide reads, in one-letter code: Small ribosomal subunit protein uS17 (85 aa).

The protein belongs to the universal ribosomal protein uS17 family. In terms of assembly, part of the 30S ribosomal subunit.

One of the primary rRNA binding proteins, it binds specifically to the 5'-end of 16S ribosomal RNA. This is Small ribosomal subunit protein uS17 from Geobacter sp. (strain M21).